An 81-amino-acid polypeptide reads, in one-letter code: Trefoil factor 3 (81 aa).

The N-terminal stretch at 1–23 is a signal peptide; the sequence is MEARTFWLLVVAVLALGSSSSTG. Positions 31-74 constitute a P-type domain; it reads NQCAVPAKDRVDCGYPEVTPEQCNNRGCCFDSSIHGVPWCFKPL. Intrachain disulfides connect cysteine 33–cysteine 59, cysteine 43–cysteine 58, and cysteine 53–cysteine 70.

In terms of assembly, monomer. Homodimer; disulfide-linked.

It localises to the secreted. It is found in the extracellular space. The protein resides in the extracellular matrix. The protein localises to the cytoplasm. Its function is as follows. Involved in the maintenance and repair of the intestinal mucosa. Promotes the mobility of epithelial cells in healing processes (motogen). This Bos taurus (Bovine) protein is Trefoil factor 3 (TFF3).